A 978-amino-acid polypeptide reads, in one-letter code: MGTRLPLVLRQLRRPPQPPGPPRRLRVPCRASSGGGGGGGGGREGLLGQRRPQDGQARSSCSPGGRTPAARDSIVREVIQNSKEVLSLLQEKNPAFKPVLAIIQAGDDNLMQEINQNLAEEAGLNITHICLPPDSSEAEIIDEILKINEDTRVHGLALQISENLFSNKVLNALKPEKDVDGVTDINLGKLVRGDAHECFVSPVAKAVIELLEKSGVNLDGKKILVVGAHGSLEAALQCLFQRKGSMTMSIQWKTRQLQSKLHEADIVVLGSPKPEEIPLTWIQPGTTVLNCSHDFLSGKVGCGSPRIHFGGLIEEDDVILLAAALRIQNMVSSGRRWLREQQHRRWRLHCLKLQPLSPVPSDIEISRGQTPKAVDVLAKEIGLLADEIEIYGKSKAKVRLSVLERLKDQADGKYVLVAGITPTPLGEGKSTVTIGLVQALTAHLNVNSFACLRQPSQGPTFGVKGGAAGGGYAQVIPMEEFNLHLTGDIHAITAANNLLAAAIDTRILHENTQTDKALYNRLVPLVNGVREFSEIQLARLKKLGINKTDPSTLTEEEVSKFARLDIDPSTITWQRVLDTNDRFLRKITIGQGNTEKGHYRQAQFDIAVASEIMAVLALTDSLADMKARLGRMVVASDKSGQPVTADDLGVTGALTVLMKDAIKPNLMQTLEGTPVFVHAGPFANIAHGNSSVLADKIALKLVGEEGFVVTEAGFGADIGMEKFFNIKCRASGLVPNVVVLVATVRALKMHGGGPSVTAGVPLKKEYTEENIQLVADGCCNLQKQIQITQLFGVPVVVALNVFKTDTRAEIDLVCELAKRAGAFDAVPCYHWSVGGKGSVDLARAVREAASKRSRFQFLYDVQVPIVDKIRTIAQAVYGAKDIELSPEAQAKIDRYTQQGFGNLPICMAKTHLSLSHQPDKKGVPRDFILPISDVRASIGAGFIYPLVGTMSTMPGLPTRPCFYDIDLDTETEQVKGLF.

A compositionally biased stretch (low complexity) spans 1-10 (MGTRLPLVLR). The N-terminal 31 residues, 1–31 (MGTRLPLVLRQLRRPPQPPGPPRRLRVPCRA), are a transit peptide targeting the mitochondrion. The tract at residues 1-71 (MGTRLPLVLR…SPGGRTPAAR (71 aa)) is disordered. Residues 31–348 (ASSGGGGGGG…REQQHRRWRL (318 aa)) are methylenetetrahydrofolate dehydrogenase and cyclohydrolase. Residues 33–45 (SGGGGGGGGGREG) are compositionally biased toward gly residues. Lys-189 is modified (N6-acetyllysine; alternate). The residue at position 189 (Lys-189) is an N6-succinyllysine; alternate. The formyltetrahydrofolate synthetase stretch occupies residues 349-978 (HCLKLQPLSP…TETEQVKGLF (630 aa)). A Phosphoserine modification is found at Ser-357. ATP is bound at residue 423-430 (TPLGEGKS). The residue at position 596 (Lys-596) is an N6-succinyllysine.

In the N-terminal section; belongs to the tetrahydrofolate dehydrogenase/cyclohydrolase family. It in the C-terminal section; belongs to the formate--tetrahydrofolate ligase family. As to quaternary structure, homodimer. As to expression, detected in most tissues, highest expression found in placenta, thymus and brain. Low expression is found in liver and skeletal muscle. Up-regulated in colon adenocarcinoma.

The protein resides in the mitochondrion. The catalysed reaction is (6S)-5,6,7,8-tetrahydrofolate + formate + ATP = (6R)-10-formyltetrahydrofolate + ADP + phosphate. The protein operates within one-carbon metabolism; tetrahydrofolate interconversion. Functionally, may provide the missing metabolic reaction required to link the mitochondria and the cytoplasm in the mammalian model of one-carbon folate metabolism complementing thus the enzymatic activities of MTHFD2. This chain is Monofunctional C1-tetrahydrofolate synthase, mitochondrial, found in Homo sapiens (Human).